The following is a 200-amino-acid chain: Molybdenum cofactor guanylyltransferase (200 aa).

Residues 10–12, Lys23, Asn51, Asp69, and Asp99 each bind GTP; that span reads LAG. Asp99 is a binding site for Mg(2+).

Belongs to the MobA family. As to quaternary structure, monomer. Mg(2+) is required as a cofactor.

The protein localises to the cytoplasm. It catalyses the reaction Mo-molybdopterin + GTP + H(+) = Mo-molybdopterin guanine dinucleotide + diphosphate. Its function is as follows. Transfers a GMP moiety from GTP to Mo-molybdopterin (Mo-MPT) cofactor (Moco or molybdenum cofactor) to form Mo-molybdopterin guanine dinucleotide (Mo-MGD) cofactor. This Shewanella pealeana (strain ATCC 700345 / ANG-SQ1) protein is Molybdenum cofactor guanylyltransferase.